A 207-amino-acid chain; its full sequence is Large ribosomal subunit protein uL3c (207 aa).

The disordered stretch occupies residues 128–148 (FTRGPMTHGSKNHRAPGSIGM).

It belongs to the universal ribosomal protein uL3 family. As to quaternary structure, part of the 50S ribosomal subunit.

The protein localises to the plastid. It is found in the chloroplast. Functionally, one of the primary rRNA binding proteins, it binds directly near the 3'-end of the 23S rRNA, where it nucleates assembly of the 50S subunit. The protein is Large ribosomal subunit protein uL3c (rpl3) of Trieres chinensis (Marine centric diatom).